A 283-amino-acid polypeptide reads, in one-letter code: MSQRIIQPSASDQQFPGKSDGYEYTVGPKQAITSEASTTYIPSRIYSESLLFKRQEASLSAMAFLFQEMISQLHRTCKTAGDFETKLSDYGHNIGIRLLELLNFRASVSPSSLPRASAFLSQNESSSKLSNASNSPGMLANSSTATSASANERLQEKQTESLSNYITKMRRRDLKILDILQFIHGTLWSYLFNHVSDDLVKSSERDNEYMIVDNFPTLTQFIPGENVSCEYFVCGIIKGFLFNAGFPCGVTAHRMPQGGHSQRTVYLIQFDRQVLDREGLRFG.

Over residues 1-16 (MSQRIIQPSASDQQFP) the composition is skewed to polar residues. Disordered regions lie at residues 1 to 20 (MSQRIIQPSASDQQFPGKSD) and 126 to 156 (SSKLSNASNSPGMLANSSTATSASANERLQE). A compositionally biased stretch (low complexity) spans 126–151 (SSKLSNASNSPGMLANSSTATSASAN).

It belongs to the TRAPP small subunits family. BET3 subfamily. As to quaternary structure, part of the multisubunit TRAPP (transport protein particle) I complex composed of BET3, BET5, TRS20, TRS23, TRS31 and TRS33. Part of the multisubunit TRAPP (transport protein particle) II complex composed of BET3, BET5, TRS20, TRS23, TRS31, TRS33, TRS65, TRS85, TRS120 and TRS130. Part of the multisubunit TRAPP (transport protein particle) III complex composed of BET3, BET5, TRS20, TRS23, TRS31, TRS33 and TRS85.

It localises to the golgi apparatus. The protein resides in the cis-Golgi network. The protein localises to the endoplasmic reticulum. It is found in the preautophagosomal structure. In terms of biological role, component of the TRAPP I, TRAPP II and TRAPP III complexes which act as guanine nucleotide exchange factors (GEF) for YPT1. TRAPP I plays a key role in the late stages of endoplasmic reticulum to Golgi traffic. TRAPP II plays a role in intra-Golgi transport. TRAPP III plays a role in autophagosome formation. This Saccharomyces cerevisiae (strain ATCC 204508 / S288c) (Baker's yeast) protein is Trafficking protein particle complex subunit 31 (TRS31).